Reading from the N-terminus, the 225-residue chain is Paired immunoglobulin-like type 2 receptor beta-2 (225 aa).

A signal peptide spans 1–31 (MALLISLPGETPAMAQILLLLSSACLHAGNS). Residues 32 to 195 (ARSNGGNDFG…NPSLMNLGAM (164 aa)) lie on the Extracellular side of the membrane. Residues asparagine 90, asparagine 107, and asparagine 160 are each glycosylated (N-linked (GlcNAc...) asparagine). Residues 196-216 (VTMLLAKVVVIILVYGWMIFL) form a helical membrane-spanning segment. Residues 217–225 (RWKQRPDPA) are Cytoplasmic-facing.

The protein resides in the membrane. In terms of biological role, paired receptors consist of highly related activating and inhibitory receptors and are widely involved in the regulation of the immune system. PILRB2 is probably a cellular signaling activating receptor that associates with ITAM-bearing adapter molecules on the cell surface. This chain is Paired immunoglobulin-like type 2 receptor beta-2 (Pilrb2), found in Mus musculus (Mouse).